The primary structure comprises 619 residues: Cationic amino acid transporter 3 (619 aa).

Residues 1–36 (MLWQALRRFGQKLVRRRLLELGMGETRLARCLSTLD) lie on the Cytoplasmic side of the membrane. The chain crosses the membrane as a helical span at residues 37-57 (LVALGVGSTLGAGVYVLAGEV). Over 58–61 (AKEK) the chain is Extracellular. Residues 62 to 82 (AGPSIVICFLVAALSSVLAGL) form a helical membrane-spanning segment. The Cytoplasmic segment spans residues 83-107 (CYAEFGARVPGSGSAYLYSYVTVGE). Residues 108-128 (LWAFTTGWNLILSYVIGTASV) form a helical membrane-spanning segment. Residues 129 to 162 (ARAWSSAFDNLIGNHISQTLKGTILLNMPHVLAE) are Extracellular-facing. The helical transmembrane segment at 163 to 183 (YPDFFALALVLLLTGLLVLGA) threads the bilayer. Residues 184–191 (NESGLVTK) lie on the Cytoplasmic side of the membrane. Residues 192 to 212 (VFTGMNLLVLGFVIISGFIKG) traverse the membrane as a helical segment. Over 213–244 (ELRNWKLTKEDYCLTMSESNGTCSLDSMGSGG) the chain is Extracellular. N-linked (GlcNAc...) asparagine glycosylation is present at asparagine 232. The chain crosses the membrane as a helical span at residues 245–265 (FMPFGLEGILRGAATCFYAFV). At 266–285 (GFDCIATTGEEAQNPQRSIP) the chain is on the cytoplasmic side. The chain crosses the membrane as a helical span at residues 286–306 (MGIVISLSICFLAYFGVSSAL). At 307-335 (TLMMPYYKLQPESPLPEAFTYVGWEPARY) the chain is on the extracellular side. A helical membrane pass occupies residues 336–356 (LVAIGSLCALSTSLLGSMFPM). Residues 357–382 (PRVIYAMAEDGLLFRVLARVHNGTHT) lie on the Cytoplasmic side of the membrane. The chain crosses the membrane as a helical span at residues 383 to 403 (PIVATVVSGVIAAFMAFLFEL). Residues 404–406 (TDL) are Extracellular-facing. Residues 407-427 (VDLMSIGTLLAYSLVSICVLI) form a helical membrane-spanning segment. Residues 428–475 (LRYQPDQEMKNGEEEVELQEERTLEAEKLTVQALFCQVDSIPTLLSGR) lie on the Cytoplasmic side of the membrane. A helical membrane pass occupies residues 476 to 496 (IVYVCSSLLAVLLTVLCLVLT). The Extracellular segment spans residues 497–507 (WWTTPLHSGDP). A helical transmembrane segment spans residues 508–528 (VWVTVVVLILGLILGISGVIW). The Cytoplasmic portion of the chain corresponds to 529 to 540 (RQPQNRTPLHFK). A helical transmembrane segment spans residues 541–561 (VPVVPLLPLVSIFVNVYLMMQ). The Extracellular segment spans residues 562–569 (MTADTWAR). Residues 570 to 590 (FGVWMLIGFAIYFGYGIQHSV) traverse the membrane as a helical segment. Over 591 to 619 (EEVKNHQTLPKTRPQTIDLDLTTSCVHSI) the chain is Cytoplasmic. Threonine 606 bears the Phosphothreonine mark. Residue serine 618 is modified to Phosphoserine.

Belongs to the amino acid-polyamine-organocation (APC) superfamily. Cationic amino acid transporter (CAT) (TC 2.A.3.3) family. In terms of processing, N-glycosylated. In terms of tissue distribution, highly expressed in brain.

Its subcellular location is the cell membrane. The enzyme catalyses L-arginine(in) = L-arginine(out). The catalysed reaction is L-lysine(in) = L-lysine(out). It carries out the reaction L-ornithine(in) = L-ornithine(out). Inhibited by high potassium ions-induced membrane depolarization. Functionally, uniporter that mediates the uptake of cationic L-amino acids such as L-arginine, L-lysine and L-ornithine. The transport is sodium ions- and pH-independent, moderately trans-stimulated and is mediated by passive diffusion. The protein is Cationic amino acid transporter 3 of Rattus norvegicus (Rat).